Reading from the N-terminus, the 981-residue chain is Amidohydrolase tasK (981 aa).

The disordered stretch occupies residues 1 to 36 (MDDQKGPLPPYTPTATAPPPASMRQRRPPGRRRALR). Residues 7 to 21 (PLPPYTPTATAPPPA) are compositionally biased toward pro residues. Residues 24–36 (RQRRPPGRRRALR) show a composition bias toward basic residues. A helical membrane pass occupies residues 40 to 57 (TVRVLALACLAFVVLAQW). Positions 86–107 (LRVRPQDPAGPGRSKNDRYLDG) are disordered. The Fe(2+) site is built by histidine 187 and histidine 189. Residues histidine 187 and histidine 189 each contribute to the Zn(2+) site. N-linked (GlcNAc...) asparagine glycosylation is present at asparagine 407. A disordered region spans residues 819–838 (KKQQKQQQQQQQQQQQQHGT). Residues 823-835 (KQQQQQQQQQQQQ) are compositionally biased toward low complexity. Asparagine 891 carries N-linked (GlcNAc...) asparagine glycosylation.

This sequence belongs to the metallo-dependent hydrolases superfamily. Fe(2+) is required as a cofactor. It depends on Mn(2+) as a cofactor. Requires Zn(2+) as cofactor.

The protein localises to the membrane. Functionally, amidohydrolase; part of the gene cluster that mediates the biosynthesis of the tetramic acids Sch210971 and Sch210972, potential anti-HIV fungal natural product that contain a decalin core. The PKS module of tasS together with the enoylreductase tasC catalyze the formation of the polyketide unit which is then conjugated to 4-hydroxyl-4-methyl glutamate (HMG) by the condensation domain of the tasS NRPS module. One unique structural feature of Sch210971 and Sch210972 is the tetramic acid motif proposed to be derived from the non-proteinogenic amino acid HMG, by a Dieckmann-type condensation catalyzed by the reductase domain of tasS. The aldolase tasA catalyzes the aldol condensation of 2 molecules of pyruvic acid to yield the intermediate 4-hydroxyl-4-methyl-2-oxoglutarate (HMOG), which can then be stereoselectively transaminated, may be by tasG, to form HMG. The Diels-Alderase tas3 then uses the Dieckmann product of tasS as substrate and catalyzes the Diels-Alder cycloaddition to form the decalin ring of Sch210971 and Sch210972. The sequence is that of Amidohydrolase tasK from Hapsidospora irregularis.